The sequence spans 139 residues: Hydrogenase maturation factor HypA (139 aa).

Ni(2+) is bound at residue H2. Zn(2+)-binding residues include C73, C76, C110, and C113.

This sequence belongs to the HypA/HybF family.

Involved in the maturation of [NiFe] hydrogenases. Required for nickel insertion into the metal center of the hydrogenase. The sequence is that of Hydrogenase maturation factor HypA from Thermococcus onnurineus (strain NA1).